Consider the following 39-residue polypeptide: Phosphatase RapI inhibitor (39 aa).

A propeptide spanning residues 1–34 is cleaved from the precursor; it reads MKISRILLAAVILSSVFSITYLQSDHNTEIKVAA.

The protein belongs to the Phr family. Post-translationally, contains a predicted signal peptide cleavage site in the N-terminal region, however the propeptide is probably subject to only one processing event, at the N-terminal end of the mature peptide.

The protein resides in the secreted. The protein localises to the cytoplasm. Intercellular signaling molecule that inhibits excision of the mobile genetic element ICEBs1 when cells are crowded by cells that contain ICEBs1 and produce the PhrI peptide. Secreted during production, but the mature peptide acts intracellularly, indicating that it needs to be imported into the cell to function. Acts by inhibiting RapI activity. The sequence is that of Phosphatase RapI inhibitor (phrI) from Bacillus subtilis (strain 168).